Here is a 298-residue protein sequence, read N- to C-terminus: Zinc import ATP-binding protein ZnuC (298 aa).

In terms of domain architecture, ABC transporter spans Ile17 to Arg232. Gly49–Ser56 provides a ligand contact to ATP. Residues Arg273 to Ala298 are disordered. Basic and acidic residues predominate over residues Cys276–Ala298.

It belongs to the ABC transporter superfamily. Zinc importer (TC 3.A.1.15.5) family. In terms of assembly, the complex is composed of two ATP-binding proteins (ZnuC), two transmembrane proteins (ZnuB) and a solute-binding protein (ZnuA).

Its subcellular location is the cell inner membrane. It carries out the reaction Zn(2+)(out) + ATP(in) + H2O(in) = Zn(2+)(in) + ADP(in) + phosphate(in) + H(+)(in). Its function is as follows. Part of the ABC transporter complex ZnuABC involved in zinc import. Responsible for energy coupling to the transport system. This is Zinc import ATP-binding protein ZnuC from Brucella abortus (strain 2308).